The sequence spans 298 residues: 33 kDa chaperonin (298 aa).

2 disulfides stabilise this stretch: Cys-237–Cys-239 and Cys-270–Cys-273.

Belongs to the HSP33 family. Under oxidizing conditions two disulfide bonds are formed involving the reactive cysteines. Under reducing conditions zinc is bound to the reactive cysteines and the protein is inactive.

The protein localises to the cytoplasm. Functionally, redox regulated molecular chaperone. Protects both thermally unfolding and oxidatively damaged proteins from irreversible aggregation. Plays an important role in the bacterial defense system toward oxidative stress. The protein is 33 kDa chaperonin of Enterococcus faecalis (strain ATCC 700802 / V583).